The following is a 155-amino-acid chain: Aspartate carbamoyltransferase regulatory chain (155 aa).

4 residues coordinate Zn(2+): cysteine 112, cysteine 117, cysteine 138, and cysteine 141.

It belongs to the PyrI family. Contains catalytic and regulatory chains. It depends on Zn(2+) as a cofactor.

Functionally, involved in allosteric regulation of aspartate carbamoyltransferase. This Methanocorpusculum labreanum (strain ATCC 43576 / DSM 4855 / Z) protein is Aspartate carbamoyltransferase regulatory chain.